Here is a 215-residue protein sequence, read N- to C-terminus: Adenylate kinase (215 aa).

10–15 (GAGKGT) serves as a coordination point for ATP. Positions 30-59 (STGDIFRDAVNQGSELGQEAQKYMSSGQLV) are NMP. AMP is bound by residues Thr31, Arg36, 57 to 59 (QLV), 85 to 88 (GFPR), and Gln92. Residues 126-163 (GRISCRECKRVYNLNFNPPREQGKCDSCGGELVQRNDD) are LID. An ATP-binding site is contributed by Arg127. Zn(2+) is bound by residues Cys130 and Cys133. Residue 136 to 137 (VY) coordinates ATP. Positions 150 and 153 each coordinate Zn(2+). Residues Arg160 and Arg171 each coordinate AMP. Position 199 (Arg199) interacts with ATP.

The protein belongs to the adenylate kinase family. As to quaternary structure, monomer.

The protein resides in the cytoplasm. The catalysed reaction is AMP + ATP = 2 ADP. The protein operates within purine metabolism; AMP biosynthesis via salvage pathway; AMP from ADP: step 1/1. In terms of biological role, catalyzes the reversible transfer of the terminal phosphate group between ATP and AMP. Plays an important role in cellular energy homeostasis and in adenine nucleotide metabolism. The chain is Adenylate kinase from Syntrophomonas wolfei subsp. wolfei (strain DSM 2245B / Goettingen).